Consider the following 180-residue polypeptide: HTH-type transcriptional regulator EcpR (180 aa).

In terms of domain architecture, HTH luxR-type spans 122–180; the sequence is KDIKKDKITDREMKIIRMTAQGMQPKSIARIENCSVKTVYTHRRNAEAKLYSKIYKLVQ. Residues 146-165 constitute a DNA-binding region (H-T-H motif); sequence PKSIARIENCSVKTVYTHRR.

This sequence belongs to the EcpR/MatA family.

The protein resides in the cytoplasm. Functionally, part of the ecpRABCDE operon, which encodes the E.coli common pilus (ECP). ECP plays a dual role in early-stage biofilm development and host cell recognition. Positively regulates the expression of the ecp operon. The polypeptide is HTH-type transcriptional regulator EcpR (ecpR) (Klebsiella pneumoniae (strain 342)).